The following is a 303-amino-acid chain: Tumor necrosis factor receptor type 1-associated DEATH domain protein (303 aa).

A Nuclear export signal motif is present at residues 141–157 (QKDDELAEIDERLKSIK). The Death domain occupies 208–298 (TSAHIQHFAK…SIALDLLSLN (91 aa)). A Nuclear localization signal motif is present at residues 224 to 237 (KPVGRSLGKTCRAL).

In terms of assembly, heterodimer with tnfrsf1a.

It is found in the nucleus. Its subcellular location is the cytoplasm. The protein resides in the cytoskeleton. Adapter molecule for tnfrsf1a that specifically associates with the cytoplasmic domain of activated tnfrsf1a mediating its interaction with fadd. The protein is Tumor necrosis factor receptor type 1-associated DEATH domain protein of Xenopus laevis (African clawed frog).